The chain runs to 1488 residues: Chromosome partition protein MukB (1488 aa).

Position 34-41 (34-41 (GGNGAGKS)) interacts with ATP. 3 coiled-coil regions span residues 326–418 (LEAD…QYNQ), 444–472 (LDTF…QTAH), and 509–602 (RHLA…QRAP). A flexible hinge region spans residues 666–783 (PGGAEDQRLN…SLPIFGRAAR (118 aa)). Coiled coils occupy residues 835–923 (EAEI…AKLE), 977–1116 (EMLS…AKAG), and 1209–1265 (VEAI…LQSV). The disordered stretch occupies residues 1049–1074 (ADSGAEERARQRRDELHAQLSNNRSR). Basic and acidic residues predominate over residues 1051–1065 (SGAEERARQRRDELH).

This sequence belongs to the SMC family. MukB subfamily. Homodimerization via its hinge domain. Binds to DNA via its C-terminal region. Interacts, and probably forms a ternary complex, with MukE and MukF via its C-terminal region. The complex formation is stimulated by calcium or magnesium. Interacts with tubulin-related protein FtsZ.

The protein localises to the cytoplasm. It localises to the nucleoid. Its function is as follows. Plays a central role in chromosome condensation, segregation and cell cycle progression. Functions as a homodimer, which is essential for chromosome partition. Involved in negative DNA supercoiling in vivo, and by this means organize and compact chromosomes. May achieve or facilitate chromosome segregation by condensation DNA from both sides of a centrally located replisome during cell division. The polypeptide is Chromosome partition protein MukB (Salmonella enteritidis PT4 (strain P125109)).